The chain runs to 1899 residues: Protein TIC 214 (1899 aa).

The next 6 helical transmembrane spans lie at 23–43 (VVVGLYYGFLTTFSIGPSYLF), 64–84 (FITGQLMMFISIYYVPLHLAL), 87–107 (PHTITVLVLPYLLFHFFWNNH), 124–144 (LSIQCLFLNNLIVQFLNLFIL), 172–192 (VGWLIGHILFMKLVGLVLVCI), and 217–237 (WTARIFSTLLFITCMYYLGVH). Disordered regions lie at residues 256-280 (EQKKSKEETDEEIEKTFETKETKKE) and 1581-1619 (PKDYLELDNGTPKEKEKQGKVKGNLGSNQKTRENLGLDL). Over residues 269-280 (EKTFETKETKKE) the composition is skewed to basic and acidic residues.

This sequence belongs to the TIC214 family. Part of the Tic complex.

Its subcellular location is the plastid. The protein resides in the chloroplast inner membrane. Involved in protein precursor import into chloroplasts. May be part of an intermediate translocation complex acting as a protein-conducting channel at the inner envelope. In Ceratophyllum demersum (Rigid hornwort), this protein is Protein TIC 214.